Here is a 196-residue protein sequence, read N- to C-terminus: Pyridoxal 5'-phosphate synthase subunit PdxT (196 aa).

47-49 (GES) contacts L-glutamine. Catalysis depends on Cys79, which acts as the Nucleophile. Residues Arg106 and 134–135 (IR) each bind L-glutamine. Residues His170 and Glu172 each act as charge relay system in the active site.

Belongs to the glutaminase PdxT/SNO family. As to quaternary structure, in the presence of PdxS, forms a dodecamer of heterodimers. Only shows activity in the heterodimer.

The enzyme catalyses aldehydo-D-ribose 5-phosphate + D-glyceraldehyde 3-phosphate + L-glutamine = pyridoxal 5'-phosphate + L-glutamate + phosphate + 3 H2O + H(+). It catalyses the reaction L-glutamine + H2O = L-glutamate + NH4(+). Its pathway is cofactor biosynthesis; pyridoxal 5'-phosphate biosynthesis. Its function is as follows. Catalyzes the hydrolysis of glutamine to glutamate and ammonia as part of the biosynthesis of pyridoxal 5'-phosphate. The resulting ammonia molecule is channeled to the active site of PdxS. In Bacillus cytotoxicus (strain DSM 22905 / CIP 110041 / 391-98 / NVH 391-98), this protein is Pyridoxal 5'-phosphate synthase subunit PdxT.